The chain runs to 250 residues: tRNA (guanine-N(1)-)-methyltransferase (250 aa).

S-adenosyl-L-methionine is bound by residues glycine 116 and 136–141 (IGDYVL).

Belongs to the RNA methyltransferase TrmD family. In terms of assembly, homodimer.

The protein resides in the cytoplasm. It carries out the reaction guanosine(37) in tRNA + S-adenosyl-L-methionine = N(1)-methylguanosine(37) in tRNA + S-adenosyl-L-homocysteine + H(+). Specifically methylates guanosine-37 in various tRNAs. This chain is tRNA (guanine-N(1)-)-methyltransferase, found in Pseudomonas putida (strain ATCC 700007 / DSM 6899 / JCM 31910 / BCRC 17059 / LMG 24140 / F1).